The chain runs to 77 residues: Large ribosomal subunit protein uL29 (77 aa).

Belongs to the universal ribosomal protein uL29 family.

This is Large ribosomal subunit protein uL29 from Mycolicibacterium gilvum (strain PYR-GCK) (Mycobacterium gilvum (strain PYR-GCK)).